The primary structure comprises 299 residues: Hairy/enhancer-of-split related with YRPW motif protein 1 (299 aa).

The disordered stretch occupies residues 1 to 53 (MKRAHPDYSSSDSELDETIEVEKESADENGNLSSALCSMSPTTSSQVLARKRR). The segment covering 28–47 (ENGNLSSALCSMSPTTSSQV) has biased composition (polar residues). Residues 48–117 (LARKRRRGII…GGKGYFDAHA (70 aa)) are transcriptional repression and interaction with NCOR1 and SIN3A. The region spanning 49–104 (ARKRRRGIIEKRRRDRINNSLSELRRLVPSAFEKQGSAKLEKAEILQMTVDHLKML) is the bHLH domain. The 37-residue stretch at 122–158 (YRSLGFRECLAEVARYLSIIEGLDASDPLLVRLVSHL) folds into the Orange domain. A disordered region spans residues 194–234 (LLLPQNGHGNAGTAASPTEPHHQGRLASAHPEAPALRAPPS). Positions 289 to 292 (YRPW) match the YRPW motif motif.

Belongs to the HEY family. May self-associate. Interacts with HES1, NCOR1 and SIN3A. Interacts with GATA4, GATA6 and HDAC1 and HEYL. Interacts with CCDC89/BOIP. Expressed in somitic mesoderm, brain, central nervous system, kidney, heart, nasal epithelium, limbs, lung, muscle, ovary and testis.

The protein resides in the nucleus. Its function is as follows. Transcriptional repressor which binds preferentially to the canonical E box sequence 5'-CACGTG-3'. Downstream effector of Notch signaling required for cardiovascular development. Specifically required for the Notch-induced endocardial epithelial to mesenchymal transition, which is itself criticial for cardiac valve and septum development. May be required in conjunction with HEY2 to specify arterial cell fate or identity. Promotes maintenance of neuronal precursor cells and glial versus neuronal fate specification. Represses transcription by the cardiac transcriptional activators GATA4 and GATA6 and by the neuronal bHLH factors ASCL1/MASH1 and NEUROD4/MATH3. In Mus musculus (Mouse), this protein is Hairy/enhancer-of-split related with YRPW motif protein 1 (Hey1).